The primary structure comprises 509 residues: Coiled-coil domain-containing protein 181 (509 aa).

2 disordered regions span residues 1 to 122 and 237 to 369; these read MDED…EDEE and FLPP…EKKK. Basic and acidic residues-rich tracts occupy residues 22 to 33 and 41 to 56; these read DLEWLINDKEKS and ACKK…KENE. Over residues 60–69 the composition is skewed to polar residues; the sequence is ELGQQLSDPD. Composition is skewed to basic and acidic residues over residues 70 to 82 and 266 to 275; these read NSPK…RRND and IKKEESEAKG. The span at 319–333 shows a compositional bias: polar residues; sequence RIQSAGVSPVTSTYC. 2 coiled-coil regions span residues 335-377 and 418-488; these read SPRQ…VFKA and LKKK…RSKQ. Positions 337–369 are enriched in basic and acidic residues; that stretch reads RQKELQKQLERKREKLKREEEQRKLEEENEKKK.

It belongs to the CCDC181 family. Homodimer. Interacts with HOOK1. Interacts with HOOK2. Interacts with HOOK3. Predominantly expressed in testis. Expressed at lower level in brain, eye, trachea and lung. Barely expressed in tongue, heart, liver, kidney, spleen and muscle. Present at high level in elongating spermatids, whereas lower levels are observed in round spermatids (at protein level).

The protein resides in the cytoplasm. It is found in the cytoskeleton. Its subcellular location is the cell projection. The protein localises to the cilium. It localises to the flagellum. Functionally, microtubule-binding protein that localizes to the microtubular manchette of elongating spermatids. In Mus musculus (Mouse), this protein is Coiled-coil domain-containing protein 181.